The primary structure comprises 79 residues: Small ribosomal subunit protein bS18 (79 aa).

As to quaternary structure, part of the 30S ribosomal subunit. Forms a tight heterodimer with protein bS6. Post-translationally, both N-terminus methionine truncation and retention have been observed for this protein. In terms of processing, may be methylated up to 6 times, on undetermined residues.

Its function is as follows. Binds as a heterodimer with protein bS6 to the central domain of the 16S rRNA, where it helps stabilize the platform of the 30S subunit. This chain is Small ribosomal subunit protein bS18, found in Rhodopseudomonas palustris (strain ATCC BAA-98 / CGA009).